Here is a 1099-residue protein sequence, read N- to C-terminus: Carbamoyl phosphate synthase large chain (1099 aa).

Residues 1-402 are carboxyphosphate synthetic domain; the sequence is MPRREDIKRI…ALGKALRSLE (402 aa). Residues arginine 129, arginine 169, glycine 175, glycine 176, glutamate 208, valine 210, glutamate 215, glycine 241, isoleucine 242, histidine 243, glutamine 285, and glutamate 299 each contribute to the ATP site. The ATP-grasp 1 domain maps to 133–328; that stretch reads KKTMEEAGLE…IAKIAALLAV (196 aa). Positions 285, 299, and 301 each coordinate Mg(2+). Mn(2+) is bound by residues glutamine 285, glutamate 299, and asparagine 301. The tract at residues 403–541 is oligomerization domain; it reads LDAAPKLDLD…STYNGVENEA (139 aa). The interval 542-944 is carbamoyl phosphate synthetic domain; it reads IPTDKEKIMI…AFAKAEIAAG (403 aa). Positions 666 to 857 constitute an ATP-grasp 2 domain; the sequence is AKLLKRIGLR…VAKIAAKIMV (192 aa). 10 residues coordinate ATP: arginine 702, lysine 741, leucine 743, glutamate 748, glycine 773, valine 774, histidine 775, serine 776, glutamine 816, and glutamate 828. Mg(2+) contacts are provided by glutamine 816, glutamate 828, and asparagine 830. Residues glutamine 816, glutamate 828, and asparagine 830 each coordinate Mn(2+). Positions 945–1099 constitute an MGS-like domain; the sequence is NPLPTEGAIL…VRKLTDTWKM (155 aa). The tract at residues 945–1099 is allosteric domain; sequence NPLPTEGAIL…VRKLTDTWKM (155 aa).

Belongs to the CarB family. In terms of assembly, composed of two chains; the small (or glutamine) chain promotes the hydrolysis of glutamine to ammonia, which is used by the large (or ammonia) chain to synthesize carbamoyl phosphate. Tetramer of heterodimers (alpha,beta)4. Requires Mg(2+) as cofactor. Mn(2+) is required as a cofactor.

The enzyme catalyses hydrogencarbonate + L-glutamine + 2 ATP + H2O = carbamoyl phosphate + L-glutamate + 2 ADP + phosphate + 2 H(+). It catalyses the reaction hydrogencarbonate + NH4(+) + 2 ATP = carbamoyl phosphate + 2 ADP + phosphate + 2 H(+). It functions in the pathway amino-acid biosynthesis; L-arginine biosynthesis; carbamoyl phosphate from bicarbonate: step 1/1. The protein operates within pyrimidine metabolism; UMP biosynthesis via de novo pathway; (S)-dihydroorotate from bicarbonate: step 1/3. Functionally, large subunit of the glutamine-dependent carbamoyl phosphate synthetase (CPSase). CPSase catalyzes the formation of carbamoyl phosphate from the ammonia moiety of glutamine, carbonate, and phosphate donated by ATP, constituting the first step of 2 biosynthetic pathways, one leading to arginine and/or urea and the other to pyrimidine nucleotides. The large subunit (synthetase) binds the substrates ammonia (free or transferred from glutamine from the small subunit), hydrogencarbonate and ATP and carries out an ATP-coupled ligase reaction, activating hydrogencarbonate by forming carboxy phosphate which reacts with ammonia to form carbamoyl phosphate. This is Carbamoyl phosphate synthase large chain from Thermotoga neapolitana (strain ATCC 49049 / DSM 4359 / NBRC 107923 / NS-E).